A 571-amino-acid chain; its full sequence is RUN and FYVE domain-containing protein 4 (571 aa).

Residues 33–166 (TDTSAELHRL…VAFELDLQQP (134 aa)) enclose the RUN domain. Residues 174 to 207 (MFSESRCSSSTQTQGRRPRKNKDAPKKIPAAYGG) are disordered. The span at 178–188 (SRCSSSTQTQG) shows a compositional bias: polar residues. A coiled-coil region spans residues 408–481 (EVSLQDEIKS…ERRDAMYQEE (74 aa)). The segment at 474–567 (RDAMYQEELG…CCPPCAQGRE (94 aa)) adopts an FYVE-type zinc-finger fold. The Zn(2+) site is built by Cys-521, Cys-524, Cys-537, Cys-540, Cys-545, Cys-548, Cys-559, and Cys-562.

In terms of assembly, forms homodimers (via coiled coil domain). Interacts with RAB7A. Forms a ternary complex with RAB7A and LAMP2; the interaction with RAB7A is mediated by RUFY4 (via RUN and coiled coil domains). Interacts with GTP-, but not GDP-bound ARL8A and ARL8B. Interacts with dynactin/DCTN1 and the dynein intermediate chain DYNC1I1/2.

The protein localises to the cytoplasmic vesicle. It is found in the autophagosome. It localises to the lysosome. Its function is as follows. ARL8 effector that promotes the coupling of endolysosomes to dynein-dynactin for retrograde transport along microtubules. Acts by binding both GTP-bound ARL8 and dynein-dynactin. In nonneuronal cells, promotes concentration of endolysosomes in the juxtanuclear area. In hippocampal neurons, drives retrograde transport of endolysosomes from the axon to the soma. Positive regulator of macroautophagy in dendritic cells. Increases autophagic flux, probably by stimulating both autophagosome formation and facilitating tethering with lysosomes. Binds to phosphatidylinositol 3-phosphate (PtdIns3P) through its FYVE-type zinc finger. Positive regulator of osteosclast bone-resorbing activity, possibly by promoting late endosome-lysosome fusion by acting as an adapter protein between RAB7A on late endosomes and LAMP2 on primary lysosomes. The polypeptide is RUN and FYVE domain-containing protein 4 (RUFY4) (Homo sapiens (Human)).